The primary structure comprises 99 residues: PqqA binding protein (99 aa).

Belongs to the PqqD family. As to quaternary structure, monomer. Interacts with PqqE.

The protein operates within cofactor biosynthesis; pyrroloquinoline quinone biosynthesis. Functionally, functions as a PqqA binding protein and presents PqqA to PqqE, in the pyrroloquinoline quinone (PQQ) biosynthetic pathway. The chain is PqqA binding protein from Acinetobacter baylyi (strain ATCC 33305 / BD413 / ADP1).